The sequence spans 241 residues: Uridylate kinase (241 aa).

12-15 (KLSG) provides a ligand contact to ATP. The interval 20-25 (GATGYG) is involved in allosteric activation by GTP. Gly54 contacts UMP. 2 residues coordinate ATP: Gly55 and Arg59. Residues Asp74 and 135 to 142 (TGNPYMTT) each bind UMP. Residues Asn163, Tyr169, and Asp172 each coordinate ATP.

The protein belongs to the UMP kinase family. As to quaternary structure, homohexamer.

The protein resides in the cytoplasm. It catalyses the reaction UMP + ATP = UDP + ADP. It participates in pyrimidine metabolism; CTP biosynthesis via de novo pathway; UDP from UMP (UMPK route): step 1/1. With respect to regulation, allosterically activated by GTP. Inhibited by UTP. Catalyzes the reversible phosphorylation of UMP to UDP. The chain is Uridylate kinase from Dehalococcoides mccartyi (strain CBDB1).